A 367-amino-acid polypeptide reads, in one-letter code: Nociceptin receptor (367 aa).

The Extracellular portion of the chain corresponds to 1-45 (MESLFPAPFWEVLYGSHFQGNLSLLNETVPHHLLLNASHSAFLPL). Residues Asn-21, Asn-26, and Asn-36 are each glycosylated (N-linked (GlcNAc...) asparagine). Residues 46-71 (GLKVTIVGLYLAVCIGGLLGNCLVMY) form a helical membrane-spanning segment. The Cytoplasmic portion of the chain corresponds to 72–84 (VILRHTKMKTATN). A helical transmembrane segment spans residues 85–106 (IYIFNLALADTLVLLTLPFQGT). The Extracellular segment spans residues 107 to 121 (DILLGFWPFGNALCK). An intrachain disulfide couples Cys-120 to Cys-197. A helical transmembrane segment spans residues 122 to 143 (TVIAIDYYNMFTSTFTLTAMSV). The Cytoplasmic segment spans residues 144-162 (DRYVAICHPIRALDVRTSS). Residues 163–185 (KAQAVNVAIWALASVVGVPVAIM) form a helical membrane-spanning segment. Residues 186-208 (GSAQVEDEEIECLVEIPAPQDYW) lie on the Extracellular side of the membrane. The helical transmembrane segment at 209–233 (GPVFAICIFLFSFIIPVLIISVCYS) threads the bilayer. The Cytoplasmic portion of the chain corresponds to 234–261 (LMIRRLRGVRLLSGSREKDRNLRRITRL). The helical transmembrane segment at 262–282 (VLVVVAVFVGCWTPVQVFVLV) threads the bilayer. The Extracellular segment spans residues 283–297 (QGLGVQPGSETAVAI). The helical transmembrane segment at 298–319 (LRFCTALGYVNSCLNPILYAFL) threads the bilayer. At 320–367 (DENFKACFRKFCCASALHREMQVSDRVRSIAKDVGLGCKTSETVPRPA) the chain is on the cytoplasmic side. The S-palmitoyl cysteine moiety is linked to residue Cys-331.

Belongs to the G-protein coupled receptor 1 family. Post-translationally, phosphorylation at Ser-360 requires GRK3. In terms of tissue distribution, in the brain, isoform KOR3 and isoform KOR3C are most abundant in hypothalamus and periaqueductal gray. Isoform KOR3A is highly expressed in cortex, striatum and brainstem. Isoform KOR3D is highly expressed in cerebellum, hypothalamus and brainstem. Detected in spleen lymphocytes.

It localises to the cell membrane. It is found in the cytoplasmic vesicle. In terms of biological role, G-protein coupled opioid receptor that functions as a receptor for the endogenous neuropeptide nociceptin. Ligand binding causes a conformation change that triggers signaling via guanine nucleotide-binding proteins (G proteins) and modulates the activity of down-stream effectors. Signaling via G proteins mediates inhibition of adenylate cyclase activity and calcium channel activity. Arrestins modulate signaling via G proteins and mediate the activation of alternative signaling pathways that lead to the activation of MAP kinases. Plays a role in modulating nociception and the perception of pain. Plays a role in the regulation of locomotor activity by the neuropeptide nociceptin. This chain is Nociceptin receptor (Oprl1), found in Mus musculus (Mouse).